A 115-amino-acid chain; its full sequence is Parathyroid hormone (115 aa).

Residues 1-25 form the signal peptide; it reads MMSAKDTVKVMVVMLAICFLARSDG. Positions 26–31 are excised as a propeptide; sequence KPIKKR. The interval 51–69 is important for receptor binding; that stretch reads RVEWLRKKLQDVHNFVALG. The disordered stretch occupies residues 75–98; that stretch reads RDGGSQRPRKKEDNVLVESHQKSL.

The protein belongs to the parathyroid hormone family. Interacts with PTH1R (via N-terminal extracellular domain).

The protein resides in the secreted. Its function is as follows. Parathyroid hormone elevates calcium level by dissolving the salts in bone and preventing their renal excretion. Acts by binding to its receptor, PTH1R, activating G protein-coupled receptor signaling. Stimulates [1-14C]-2-deoxy-D-glucose (2DG) transport and glycogen synthesis in osteoblastic cells. In Sus scrofa (Pig), this protein is Parathyroid hormone (PTH).